We begin with the raw amino-acid sequence, 379 residues long: Epoxyqueuosine reductase (379 aa).

The Proton donor role is filled by aspartate 140. Residues phenylalanine 184–lysine 214 form the 4Fe-4S ferredoxin-type domain. [4Fe-4S] cluster-binding residues include cysteine 194, cysteine 197, cysteine 200, cysteine 204, cysteine 220, cysteine 246, cysteine 249, and cysteine 253. Residues glutamine 307–asparagine 332 form an HEAT-like PBS-type repeat.

It belongs to the QueG family. As to quaternary structure, monomer. Cob(II)alamin serves as cofactor. It depends on [4Fe-4S] cluster as a cofactor.

It localises to the cytoplasm. The enzyme catalyses epoxyqueuosine(34) in tRNA + AH2 = queuosine(34) in tRNA + A + H2O. It functions in the pathway tRNA modification; tRNA-queuosine biosynthesis. Catalyzes the conversion of epoxyqueuosine (oQ) to queuosine (Q), which is a hypermodified base found in the wobble positions of tRNA(Asp), tRNA(Asn), tRNA(His) and tRNA(Tyr). The polypeptide is Epoxyqueuosine reductase (Listeria monocytogenes serovar 1/2a (strain ATCC BAA-679 / EGD-e)).